Here is an 850-residue protein sequence, read N- to C-terminus: Protein translocase subunit SecA 2 (850 aa).

Residues glutamine 83, glycine 101–threonine 105, and aspartate 491 each bind ATP.

It belongs to the SecA family. Monomer and homodimer. Part of the essential Sec protein translocation apparatus which comprises SecA, SecYEG and auxiliary proteins SecDF. Other proteins may also be involved.

It localises to the cell membrane. The protein resides in the cytoplasm. The catalysed reaction is ATP + H2O + cellular proteinSide 1 = ADP + phosphate + cellular proteinSide 2.. Functionally, part of the Sec protein translocase complex. Interacts with the SecYEG preprotein conducting channel. Has a central role in coupling the hydrolysis of ATP to the transfer of proteins into and across the cell membrane, serving as an ATP-driven molecular motor driving the stepwise translocation of polypeptide chains across the membrane. The sequence is that of Protein translocase subunit SecA 2 from Mycolicibacterium vanbaalenii (strain DSM 7251 / JCM 13017 / BCRC 16820 / KCTC 9966 / NRRL B-24157 / PYR-1) (Mycobacterium vanbaalenii).